Here is a 135-residue protein sequence, read N- to C-terminus: Small ribosomal subunit protein uS9 (135 aa).

A disordered region spans residues 96–135; sequence SADNRKPLKTEGHLSRDPRAKERRKYGLKKARKAPQFSKR. Basic and acidic residues predominate over residues 97-115; the sequence is ADNRKPLKTEGHLSRDPRA. A compositionally biased stretch (basic residues) spans 116-135; it reads KERRKYGLKKARKAPQFSKR.

This sequence belongs to the universal ribosomal protein uS9 family.

The polypeptide is Small ribosomal subunit protein uS9 (Prochlorococcus marinus (strain MIT 9313)).